We begin with the raw amino-acid sequence, 489 residues long: Cytochrome P450 monooxygenase ataF (489 aa).

Residues 12 to 32 form a helical membrane-spanning segment; sequence WLEHSAVIATLFAFGTALFLV. Residue Asn-289 is glycosylated (N-linked (GlcNAc...) asparagine). Cys-434 contributes to the heme binding site.

Belongs to the cytochrome P450 family. Heme is required as a cofactor.

The protein resides in the membrane. It participates in mycotoxin biosynthesis. In terms of biological role, cytochrome P450 monooxygenase; part of the gene cluster that mediates the biosynthesis of acetylaranotin, a member of the epipolythiodioxopiperazine (ETP) class of toxins characterized by a disulfide-bridged cyclic dipeptide. The first step of acetylaranotin biosynthesis is performed by the NRPS ataP which produces diketopiperazine cyclo-L-Phe-L-Phe via the condensation of 2 phenylalanines (L-Phe). The ataC domain of ataTC then catalyzes the formation of bishydroxylation of cyclo-L-Phe-L-Phe. The glutathione S-transferase domain ataG in ataIMG further catalyzes the conjugation of two glutathiones to the bishydroxylated intermediate. Next, the dipeptidase ataJ removes the Glu residues. The following step is performed by the carbon sulfur lyase domain ataI of ataIMG which may convert the bis-cysteinyl adduct to yield an epidithiol intermediate. The ataT domain from ataTC then catalyzes the oxidation of the free dithiols, followed by a cyclization step catalyzed by the cytochrome P450 ataF. AtaF probably acts as an epoxidase to promote a dual epoxidation formation at C8 and C9 along with C8' and C9', followed by the spontaneous nucleophilic attack of the amide nitrogens N10 and N10' to yield an intermediate with the pyrrolidine partial structure. The final steps of acetylaranotin biosynthesis involve the acetylation and ring rearrangement of an epitetrathiodiketopiperazine intermediate to produce acetylaranotin. AtaH probably catalyzes the acetylation of epitetrathiodiketopiperazine to produce a diacetate and ataY is responsible for the formation of the dihydrooxepin moiety that converts the diacetate intermediate to acetylaranotin via acetylapoaranotin. Both enzymes could function independently in the absence of the other. The acetylaranotin bis-thiomethyltransferase ataS located outside of acetylaranotin gene cluster is the main thiomethyltransferase responsible for converting acetylaranotin and its related intermediates to their methylated forms. The protein is Cytochrome P450 monooxygenase ataF of Aspergillus terreus (strain NIH 2624 / FGSC A1156).